A 318-amino-acid chain; its full sequence is tRNA pseudouridine synthase B (318 aa).

The Nucleophile role is filled by D47.

Belongs to the pseudouridine synthase TruB family. Type 1 subfamily.

The catalysed reaction is uridine(55) in tRNA = pseudouridine(55) in tRNA. Functionally, responsible for synthesis of pseudouridine from uracil-55 in the psi GC loop of transfer RNAs. In Colwellia psychrerythraea (strain 34H / ATCC BAA-681) (Vibrio psychroerythus), this protein is tRNA pseudouridine synthase B.